Reading from the N-terminus, the 195-residue chain is Coiled-coil domain-containing protein 184 (195 aa).

A coiled-coil region spans residues 39 to 68; that stretch reads GMKELMEHLKAQLQALFEDVRAMRGALDEQ. A disordered region spans residues 98 to 175; the sequence is RQGGLGVVGN…AGLLGGDGPL (78 aa). Positions 135–146 are enriched in acidic residues; that stretch reads PEDEEDDDEEEK.

The polypeptide is Coiled-coil domain-containing protein 184 (CCDC184) (Bos taurus (Bovine)).